Consider the following 974-residue polypeptide: Kinesin-like protein KIN-7A (974 aa).

Positions 1 to 29 are disordered; it reads MTIKTPGTPVSKMDRTPAVTPGGSSRSRE. Residues 31-353 enclose the Kinesin motor domain; that stretch reads KIVVTVRLRP…LYFANRAKEV (323 aa). 117–124 serves as a coordination point for ATP; the sequence is GQTSSGKT. 2 coiled-coil regions span residues 362 to 435 and 565 to 603; these read VVSD…KGLN and SANLKEEITRLHSQGSTIANLEEQLESVQKSIDKLVMSL. Disordered stretches follow at residues 605–649 and 663–713; these read SNIS…PCSP and NKAP…SSVN. A compositionally biased stretch (basic residues) spans 616–628; that stretch reads TKNHHHQSKKKKL. 2 stretches are compositionally biased toward polar residues: residues 638 to 649 and 666 to 682; these read NRQNFLKSPCSP and PQENNSSAARGATTPQG. The segment covering 683 to 693 has biased composition (basic and acidic residues); it reads SEKETPQKGEE.

This sequence belongs to the TRAFAC class myosin-kinesin ATPase superfamily. Kinesin family. KIN-7 subfamily. Post-translationally, phosphorylated at Thr-145, Thr-687 and Thr-703 by CDKAs and CDKBs. Phosphorylated NACK1 fails to mediate cytokinesis. As to expression, expressed in roots, flowers, pollen mother cells and embryos.

Its subcellular location is the cytoplasm. The protein resides in the cytoskeleton. It localises to the phragmoplast. Its function is as follows. Probable plus end-directed motor protein that functions in the NACK-PQR (ANP1-MKK6-MPK4) MAP kinase signaling pathway, which is essential for somatic cell cytokinesis, especially for the cell-plate formation and its expansion. Regulates the activity and the localization of ANP1, probably by association through the non-catalytic region of the kinase. Functionally redundant with NACK2 and essential to promote the progression of cytokinesis and for cellularization (formation of the cell plate) during microgametogenesis and megagametogenesis. The chain is Kinesin-like protein KIN-7A from Arabidopsis thaliana (Mouse-ear cress).